A 451-amino-acid polypeptide reads, in one-letter code: Chromosomal replication initiator protein DnaA (451 aa).

Positions 1 to 72 (MSLPTSLWDK…TELLDELSDT (72 aa)) are domain I, interacts with DnaA modulators. The segment at 72–114 (TPPQIRLQIGSRSTEMPTKNSHEPSHRKAAAPPAGTTISHTQA) is domain II. A compositionally biased stretch (polar residues) spans 81–90 (GSRSTEMPTK). Positions 81-106 (GSRSTEMPTKNSHEPSHRKAAAPPAG) are disordered. Residues 115–331 (NINSNFTFDS…GALKRVIANA (217 aa)) are domain III, AAA+ region. ATP contacts are provided by Gly159, Gly161, Lys162, and Thr163. Positions 332–451 (HFTGQSITVD…YKNLMRILSG (120 aa)) are domain IV, binds dsDNA.

The protein belongs to the DnaA family. As to quaternary structure, oligomerizes as a right-handed, spiral filament on DNA at oriC.

It is found in the cytoplasm. In terms of biological role, plays an essential role in the initiation and regulation of chromosomal replication. ATP-DnaA binds to the origin of replication (oriC) to initiate formation of the DNA replication initiation complex once per cell cycle. Binds the DnaA box (a 9 base pair repeat at the origin) and separates the double-stranded (ds)DNA. Forms a right-handed helical filament on oriC DNA; dsDNA binds to the exterior of the filament while single-stranded (ss)DNA is stabiized in the filament's interior. The ATP-DnaA-oriC complex binds and stabilizes one strand of the AT-rich DNA unwinding element (DUE), permitting loading of DNA polymerase. After initiation quickly degrades to an ADP-DnaA complex that is not apt for DNA replication. Binds acidic phospholipids. The chain is Chromosomal replication initiator protein DnaA from Coxiella burnetii (strain CbuK_Q154) (Coxiella burnetii (strain Q154)).